We begin with the raw amino-acid sequence, 357 residues long: Isopentenyl-diphosphate delta-isomerase (357 aa).

6–7 (RK) serves as a coordination point for substrate. Residues serine 62, 63 to 65 (AMT), serine 93, and asparagine 122 contribute to the FMN site. Residue 93-95 (SQR) participates in substrate binding. Glutamine 156 serves as a coordination point for substrate. Glutamate 157 serves as a coordination point for Mg(2+). FMN-binding positions include lysine 186, threonine 216, 267 to 269 (GVR), and 288 to 289 (AL).

This sequence belongs to the IPP isomerase type 2 family. As to quaternary structure, homooctamer. Dimer of tetramers. The cofactor is FMN. NADPH is required as a cofactor. It depends on Mg(2+) as a cofactor.

Its subcellular location is the cytoplasm. It catalyses the reaction isopentenyl diphosphate = dimethylallyl diphosphate. Involved in the biosynthesis of isoprenoids. Catalyzes the 1,3-allylic rearrangement of the homoallylic substrate isopentenyl (IPP) to its allylic isomer, dimethylallyl diphosphate (DMAPP). The protein is Isopentenyl-diphosphate delta-isomerase of Methanothrix thermoacetophila (strain DSM 6194 / JCM 14653 / NBRC 101360 / PT) (Methanosaeta thermophila).